A 435-amino-acid polypeptide reads, in one-letter code: Serine hydroxymethyltransferase (435 aa).

(6S)-5,6,7,8-tetrahydrofolate is bound by residues leucine 131 and 135–137 (GHL). Lysine 240 is subject to N6-(pyridoxal phosphate)lysine.

It belongs to the SHMT family. In terms of assembly, homodimer. The cofactor is pyridoxal 5'-phosphate.

The protein localises to the cytoplasm. It carries out the reaction (6R)-5,10-methylene-5,6,7,8-tetrahydrofolate + glycine + H2O = (6S)-5,6,7,8-tetrahydrofolate + L-serine. It participates in one-carbon metabolism; tetrahydrofolate interconversion. It functions in the pathway amino-acid biosynthesis; glycine biosynthesis; glycine from L-serine: step 1/1. Functionally, catalyzes the reversible interconversion of serine and glycine with tetrahydrofolate (THF) serving as the one-carbon carrier. This reaction serves as the major source of one-carbon groups required for the biosynthesis of purines, thymidylate, methionine, and other important biomolecules. Also exhibits THF-independent aldolase activity toward beta-hydroxyamino acids, producing glycine and aldehydes, via a retro-aldol mechanism. The polypeptide is Serine hydroxymethyltransferase (Bifidobacterium longum subsp. infantis (strain ATCC 15697 / DSM 20088 / JCM 1222 / NCTC 11817 / S12)).